Reading from the N-terminus, the 330-residue chain is MFPRVAFLGQYPVPSKDLPLTFISLEEWTLVRLHGPDVIQCLHNQFTCDIQNLNKHKYSFAAHCNPKGKMISNLYVFHLKNQEMAFIERLNICKKQIEEMKKYMVFSNVTVIPDYNAILIGIAGTNARNHLSMFFSVLPNKTHTIIHTQDVTLLYLSSPSERFLLIINKKSVLDYLLNESQSQIQFNDSRQWVSLDMEAGYPIIEPITSELFIPQAVNMDILDGISFNKGCYIGQESIARIKYRGYNKQTLYRLNGVMDYKKNYNLPAAGDQVELKINNQHWKNVGIVLQSCQIKKDNIWVQVVLNRSILEPSELRITNTQTHDNLMFYY.

The folate site is built by Trp-28 and Trp-192.

The protein belongs to the tRNA-modifying YgfZ family.

It is found in the cytoplasm. In terms of biological role, folate-binding protein involved in regulating the level of ATP-DnaA and in the modification of some tRNAs. It is probably a key factor in regulatory networks that act via tRNA modification, such as initiation of chromosomal replication. In Blochmanniella pennsylvanica (strain BPEN), this protein is tRNA-modifying protein YgfZ.